We begin with the raw amino-acid sequence, 42 residues long: Cytochrome b559 subunit beta (42 aa).

Residues 17–33 (WLAIHAIGIPAVFFIGS) traverse the membrane as a helical segment. Position 21 (histidine 21) interacts with heme.

It belongs to the PsbE/PsbF family. In terms of assembly, heterodimer of an alpha subunit and a beta subunit. PSII is composed of 1 copy each of membrane proteins PsbA, PsbB, PsbC, PsbD, PsbE, PsbF, PsbH, PsbI, PsbJ, PsbK, PsbL, PsbM, PsbT, PsbX, PsbY, PsbZ, Psb30/Ycf12, at least 3 peripheral proteins of the oxygen-evolving complex and a large number of cofactors. It forms dimeric complexes. Heme b serves as cofactor.

It localises to the plastid. The protein localises to the cyanelle thylakoid membrane. This b-type cytochrome is tightly associated with the reaction center of photosystem II (PSII). PSII is a light-driven water:plastoquinone oxidoreductase that uses light energy to abstract electrons from H(2)O, generating O(2) and a proton gradient subsequently used for ATP formation. It consists of a core antenna complex that captures photons, and an electron transfer chain that converts photonic excitation into a charge separation. The sequence is that of Cytochrome b559 subunit beta from Cyanophora paradoxa.